Consider the following 432-residue polypeptide: Selenocysteine lyase (432 aa).

An N-acetylmethionine modification is found at Met-1. The interval 1 to 20 is disordered; that stretch reads MDVARNGARGSVESPPNRKV. Ser-117 carries the post-translational modification Phosphoserine. The residue at position 247 (Lys-247) is an N6-(pyridoxal phosphate)lysine. The active-site S-selanylcysteine intermediate is Cys-375.

The protein belongs to the class-V pyridoxal-phosphate-dependent aminotransferase family. In terms of assembly, homodimer. Pyridoxal 5'-phosphate is required as a cofactor.

Its subcellular location is the cytoplasm. It localises to the cytosol. It catalyses the reaction L-selenocysteine + AH2 = hydrogenselenide + L-alanine + A + H(+). Functionally, catalyzes the decomposition of L-selenocysteine to L-alanine and elemental selenium. The polypeptide is Selenocysteine lyase (Scly) (Rattus norvegicus (Rat)).